The sequence spans 258 residues: Imidazole glycerol phosphate synthase subunit HisF (258 aa).

Residues D12 and D131 contribute to the active site.

This sequence belongs to the HisA/HisF family. In terms of assembly, heterodimer of HisH and HisF.

It localises to the cytoplasm. The catalysed reaction is 5-[(5-phospho-1-deoxy-D-ribulos-1-ylimino)methylamino]-1-(5-phospho-beta-D-ribosyl)imidazole-4-carboxamide + L-glutamine = D-erythro-1-(imidazol-4-yl)glycerol 3-phosphate + 5-amino-1-(5-phospho-beta-D-ribosyl)imidazole-4-carboxamide + L-glutamate + H(+). It functions in the pathway amino-acid biosynthesis; L-histidine biosynthesis; L-histidine from 5-phospho-alpha-D-ribose 1-diphosphate: step 5/9. Functionally, IGPS catalyzes the conversion of PRFAR and glutamine to IGP, AICAR and glutamate. The HisF subunit catalyzes the cyclization activity that produces IGP and AICAR from PRFAR using the ammonia provided by the HisH subunit. The sequence is that of Imidazole glycerol phosphate synthase subunit HisF from Nitrosomonas europaea (strain ATCC 19718 / CIP 103999 / KCTC 2705 / NBRC 14298).